Consider the following 809-residue polypeptide: Lethal factor (809 aa).

Positions 1–33 (MNIKKEFIKVISMSCLVTAITLSGPVFIPLVQG) are cleaved as a signal peptide. The tract at residues 39 to 66 (DVGMHVKEKEKNKDENKRKDEERNKTQE) is disordered. Residues 40–66 (VGMHVKEKEKNKDENKRKDEERNKTQE) are compositionally biased toward basic and acidic residues. Residues 60 to 295 (ERNKTQEEHL…NLSLEELKDQ (236 aa)) are i; PA-binding region. The ATLF-like 1 domain occupies 70–282 (KEIMKHIVKI…AFNYMDKFNE (213 aa)). Positions 296-330 (RMLARYEKWEKIKQHYQHWSDSLSEEGRGLLKKLQ) are IIA. A run of 5 repeats spans residues 315 to 333 (SDSL…QIPI), 342 to 357 (HSLS…RIQI), 360 to 378 (SDFL…QIDI), 380 to 397 (DSLS…QVDS), and 399 to 416 (NPLS…KLDI). A 5 X approximate repeats region spans residues 315 to 416 (SDSLSEEGRG…EFLKKLKLDI (102 aa)). Residues 336-416 (KKDDIIHSLS…EFLKKLKLDI (81 aa)) are III. The IIB stretch occupies residues 420–583 (DINQRLQDTG…EYIRIDAKVV (164 aa)). The IV stretch occupies residues 585–809 (KSKIDTKIQE…NDQIKFIINS (225 aa)). The 196-residue stretch at 609–804 (LPKYTKLITF…TFQFINDQIK (196 aa)) folds into the ATLF-like 2 domain. Zn(2+) is bound at residue H719. E720 (proton acceptor) is an active-site residue. Positions 723, 761, and 768 each coordinate Zn(2+).

The protein belongs to the peptidase M34 family. As to quaternary structure, interacts (via ATLF domain 1) with the cleaved form of protective antigen (PA-63) anthrax toxin; interaction is required for LF translocation into the host cytoplasm. Interacts with PA-63 homooligomers (either homoheptamers or homooctamers): three molecules of LF bind the PA-63 homoheptamer to form the PA(7)LF(3) complex, in which the relative position of the N-terminal alpha-helices in the three LFs determines which factor is translocated first. The cofactor is Zn(2+).

The protein localises to the secreted. Its subcellular location is the host cytoplasm. The protein resides in the host cytosol. The catalysed reaction is Preferred amino acids around the cleavage site can be denoted BBBBxHx-|-H, in which B denotes Arg or Lys, H denotes a hydrophobic amino acid, and x is any amino acid. The only known protein substrates are mitogen-activated protein (MAP) kinase kinases.. Inhibited by NSC-12155 (1,3-Bis(2-methyl-4-aminoquinoline-6-yl)ure). Inhibited by phenoxyacetic acid bearing alpha-benzyl substituents on the C2-side chain. Inhibited by sulfonamide hydroxamate with benzylic additions at the sulfonamide nitrogen. Also inhibited by sulfonamide hydroxamates with alkylation at the sulfonamide nitrogen. Inhibited by hydroxamic acid inhibitors. Its function is as follows. Lethal factor (LF), which constitutes one of the three proteins composing the anthrax toxin, is able to trigger rapid cell death in macrophages. Acts as a protease that cleaves the N-terminal of most dual specificity mitogen-activated protein kinase kinases (MAPKKs or MAP2Ks) (except for MAP2K5): cleavage invariably occurs within the N-terminal proline-rich region preceding the kinase domain, thus disrupting a sequence involved in directing specific protein-protein interactions necessary for the assembly of signaling complexes. Also cleaves mouse Nlrp1b: host Nlrp1b cleavage promotes ubiquitination and degradation of the N-terminal part of Nlrp1b by the proteasome, thereby releasing the cleaved C-terminal part of Nlrp1b, which polymerizes and forms the Nlrp1b inflammasome followed by host cell pyroptosis. Able to cleave mouse Nlrp1b alleles 1 and 5, while it is not able to cleave Nlrp1b alleles 2, 3 and 4. In contrast, does not cleave NLRP1 human ortholog. LF is not toxic by itself and only acts as a lethal factor when associated with protective antigen (PA) to form the lethal toxin (LeTx): PA is required for LF translocation into the host cytosol. The protein is Lethal factor of Bacillus anthracis.